The following is a 451-amino-acid chain: Probable D-serine dehydratase (451 aa).

Residue Lys119 is modified to N6-(pyridoxal phosphate)lysine.

The protein belongs to the serine/threonine dehydratase family. DsdA subfamily. Requires pyridoxal 5'-phosphate as cofactor.

The enzyme catalyses D-serine = pyruvate + NH4(+). This Acidovorax sp. (strain JS42) protein is Probable D-serine dehydratase.